The sequence spans 28 residues: Kappa-buthitoxin-Tt2b (28 aa).

3 disulfides stabilise this stretch: C2-C24, C7-C20, and C11-C26.

Expressed by the venom gland.

The protein resides in the secreted. Blocks potassium channels Shaker-IR (with inactivation domain removed) and hKv1.2/KCNA2. The protein is Kappa-buthitoxin-Tt2b of Tityus trivittatus (Argentinean scorpion).